Here is a 485-residue protein sequence, read N- to C-terminus: N-succinylglutamate 5-semialdehyde dehydrogenase (485 aa).

220 to 225 (GSANTG) contacts NAD(+). Catalysis depends on residues glutamate 243 and cysteine 278.

The protein belongs to the aldehyde dehydrogenase family. AstD subfamily.

The enzyme catalyses N-succinyl-L-glutamate 5-semialdehyde + NAD(+) + H2O = N-succinyl-L-glutamate + NADH + 2 H(+). It participates in amino-acid degradation; L-arginine degradation via AST pathway; L-glutamate and succinate from L-arginine: step 4/5. In terms of biological role, catalyzes the NAD-dependent reduction of succinylglutamate semialdehyde into succinylglutamate. In Vibrio campbellii (strain ATCC BAA-1116), this protein is N-succinylglutamate 5-semialdehyde dehydrogenase.